Reading from the N-terminus, the 117-residue chain is Ig heavy chain V region 102 (117 aa).

A signal peptide spans 1–19; the sequence is MGWSCIILFLVATATGVHS. The tract at residues 20-49 is framework-1; the sequence is HVQLQQPGAELVKPGASVKVSCKASGYTFT. A disulfide bond links Cys-41 and Cys-115. The complementarity-determining-1 stretch occupies residues 50–54; sequence SYWMH. The tract at residues 55 to 68 is framework-2; it reads WVKQRPGQGLEWIG. The tract at residues 69-85 is complementarity-determining-2; that stretch reads RIHPSDSDTNYNQKFKG. The interval 86–117 is framework-3; the sequence is KATLTVDKSSSTAYMQLSSLTSEDSAVYYCAI.

The protein is Ig heavy chain V region 102 of Mus musculus (Mouse).